Reading from the N-terminus, the 1357-residue chain is DNA-directed RNA polymerase subunit beta (1357 aa).

It belongs to the RNA polymerase beta chain family. The RNAP catalytic core consists of 2 alpha, 1 beta, 1 beta' and 1 omega subunit. When a sigma factor is associated with the core the holoenzyme is formed, which can initiate transcription.

It catalyses the reaction RNA(n) + a ribonucleoside 5'-triphosphate = RNA(n+1) + diphosphate. DNA-dependent RNA polymerase catalyzes the transcription of DNA into RNA using the four ribonucleoside triphosphates as substrates. The protein is DNA-directed RNA polymerase subunit beta of Pseudomonas aeruginosa (strain LESB58).